The sequence spans 344 residues: Dihydroorotate dehydrogenase (quinone) (344 aa).

FMN contacts are provided by residues 65–69 (AGFDK) and Thr-89. Lys-69 is a substrate binding site. 114 to 118 (NRMGF) contacts substrate. Positions 145 and 178 each coordinate FMN. Residue Asn-178 participates in substrate binding. Ser-181 acts as the Nucleophile in catalysis. Position 183 (Asn-183) interacts with substrate. 2 residues coordinate FMN: Lys-215 and Thr-243. 244-245 (NT) contacts substrate. Residues Gly-269, Gly-298, and 319-320 (YT) each bind FMN.

This sequence belongs to the dihydroorotate dehydrogenase family. Type 2 subfamily. As to quaternary structure, monomer. FMN serves as cofactor.

It is found in the cell membrane. It carries out the reaction (S)-dihydroorotate + a quinone = orotate + a quinol. Its pathway is pyrimidine metabolism; UMP biosynthesis via de novo pathway; orotate from (S)-dihydroorotate (quinone route): step 1/1. In terms of biological role, catalyzes the conversion of dihydroorotate to orotate with quinone as electron acceptor. In Clavibacter sepedonicus (Clavibacter michiganensis subsp. sepedonicus), this protein is Dihydroorotate dehydrogenase (quinone).